The primary structure comprises 527 residues: Lysine--tRNA ligase (527 aa).

The short motif at 44–52 (PSGLPHIGT) is the 'HIGH' region element. Residues 290–294 (KISKS) carry the 'KMSKS' region motif. Residue lysine 293 participates in ATP binding.

This sequence belongs to the class-I aminoacyl-tRNA synthetase family.

It localises to the cytoplasm. The enzyme catalyses tRNA(Lys) + L-lysine + ATP = L-lysyl-tRNA(Lys) + AMP + diphosphate. The chain is Lysine--tRNA ligase from Roseobacter denitrificans (strain ATCC 33942 / OCh 114) (Erythrobacter sp. (strain OCh 114)).